The sequence spans 62 residues: MSERQGAGATNGKDKTSGENDGQKKVQEEFDIDMDAPETERAAVAIQSQFRKFQKKKAGSQS.

The tract at residues 1–39 (MSERQGAGATNGKDKTSGENDGQKKVQEEFDIDMDAPET) is disordered. The segment covering 12–28 (GKDKTSGENDGQKKVQE) has biased composition (basic and acidic residues). Residues 28–40 (EEFDIDMDAPETE) form an acidic; binds calcium and is required for modulating the calcium-binding kinetics of calmodulin region. The 24-residue stretch at 39–62 (TERAAVAIQSQFRKFQKKKAGSQS) folds into the IQ domain.

The protein belongs to the PCP4 family. Binds to both calcium-free and calcium-bound calmodulin. The affinity for the calcium-bound form is 50-fold greater.

In terms of biological role, functions as a modulator of calcium-binding by calmodulin. Thereby, regulates calmodulin activity and the different processes it controls. For instance, may play a role in neuronal differentiation through activation of calmodulin-dependent kinase signaling pathways. The sequence is that of Calmodulin regulator protein PCP4 from Homo sapiens (Human).